A 263-amino-acid chain; its full sequence is MTEQEDTFSAVRFHKSSGLQNEMRLKETRKPEKARLRVCSVPWQLIVIALGILISLRLVTVAVLMTNIFQYGQQKHELKEFLKHHNNCSIMQSDINLKDELLKNKSIECNLLESLNRDQNILCDKTRTVLDYLQHTGRGVKVYWFCYGMKCYYFVMDRKPWSRCKQSCQNSSLTLLKIDDEDELKFLQLVVPSDSCWIGLSYDNKKKDWAWIDNRPSKLALNTTKYNIRDGGCMFLSKTRLDNNYCDQSFICICGKRLDKFPH.

Over 1–44 (MTEQEDTFSAVRFHKSSGLQNEMRLKETRKPEKARLRVCSVPWQ) the chain is Cytoplasmic. Residues 45–65 (LIVIALGILISLRLVTVAVLM) traverse the membrane as a helical; Signal-anchor for type II membrane protein segment. The Extracellular segment spans residues 66–263 (TNIFQYGQQK…CGKRLDKFPH (198 aa)). 2 N-linked (GlcNAc...) asparagine glycosylation sites follow: N87 and N104. The region spanning 139–258 (GVKVYWFCYG…SFICICGKRL (120 aa)) is the C-type lectin domain. Intrachain disulfides connect C146–C151, C164–C252, C168–C254, and C233–C246. N-linked (GlcNAc...) asparagine glycans are attached at residues N170 and N222.

Homodimer; disulfide-linked. Interacts with the adapter protein TYROBP/DAP12; the interaction leads to natural killer cell activation.

It localises to the cell membrane. Functionally, receptor on natural killer (NK) cells for class I MHC. The protein is Killer cell lectin-like receptor 4 (Klra4) of Mus musculus (Mouse).